The sequence spans 594 residues: Acyl-coenzyme A thioesterase 11 (594 aa).

The N-terminal 20 residues, 1–20 (MIQNVGNHLRRGFASMFSNR), are a transit peptide targeting the mitochondrion. 2 positions are modified to phosphoserine: Ser15 and Ser25. The segment at 20 to 43 (RTSRKSISHPESGDPPTMAEGEGY) is disordered. The HotDog ACOT-type 1 domain maps to 45–157 (NPTEVQMSQL…LATFVAHREL (113 aa)). Residues 93 to 95 (TAS), 122 to 124 (NSS), Arg183, and 272 to 274 (HFR) each bind CoA. The HotDog ACOT-type 2 domain maps to 217–330 (EKTRVESVEL…FMTFVVLDKD (114 aa)). In terms of domain architecture, START spans 370–582 (KQAEVALSVP…FKACESFLLD (213 aa)).

The protein localises to the mitochondrion matrix. Its subcellular location is the cytoplasm. The catalysed reaction is hexadecanoyl-CoA + H2O = hexadecanoate + CoA + H(+). It catalyses the reaction tetradecanoyl-CoA + H2O = tetradecanoate + CoA + H(+). The enzyme catalyses dodecanoyl-CoA + H2O = dodecanoate + CoA + H(+). It carries out the reaction butanoyl-CoA + H2O = butanoate + CoA + H(+). It participates in lipid metabolism; fatty acid metabolism. Its function is as follows. Has an acyl-CoA thioesterase activity with a preference for the long chain fatty acyl-CoA thioesters hexadecanoyl-CoA/palmitoyl-CoA and tetradecanoyl-CoA/myristoyl-CoA which are the main substrates in the mitochondrial beta-oxidation pathway. In Mus musculus (Mouse), this protein is Acyl-coenzyme A thioesterase 11 (Acot11).